Here is a 434-residue protein sequence, read N- to C-terminus: Gamma-glutamyl phosphate reductase (434 aa).

Belongs to the gamma-glutamyl phosphate reductase family.

Its subcellular location is the cytoplasm. It catalyses the reaction L-glutamate 5-semialdehyde + phosphate + NADP(+) = L-glutamyl 5-phosphate + NADPH + H(+). The protein operates within amino-acid biosynthesis; L-proline biosynthesis; L-glutamate 5-semialdehyde from L-glutamate: step 2/2. In terms of biological role, catalyzes the NADPH-dependent reduction of L-glutamate 5-phosphate into L-glutamate 5-semialdehyde and phosphate. The product spontaneously undergoes cyclization to form 1-pyrroline-5-carboxylate. The polypeptide is Gamma-glutamyl phosphate reductase (Nostoc sp. (strain PCC 7120 / SAG 25.82 / UTEX 2576)).